We begin with the raw amino-acid sequence, 510 residues long: Bifunctional pantoate ligase/cytidylate kinase (510 aa).

Residues 1–276 (MKKVIIRKTE…CGETRLIDHV (276 aa)) are pantoate--beta-alanine ligase. 29–36 (MGNLHNGH) serves as a coordination point for ATP. H36 acts as the Proton donor in catalysis. Q61 contacts (R)-pantoate. Beta-alanine is bound at residue Q61. 150 to 153 (GEKD) is a binding site for ATP. Q156 serves as a coordination point for (R)-pantoate. 187 to 190 (LSSR) lines the ATP pocket. Residues 277 to 510 (FLMKRSPIIA…DKIPKETQIR (234 aa)) form a cytidylate kinase region.

It in the N-terminal section; belongs to the pantothenate synthetase family. This sequence in the C-terminal section; belongs to the cytidylate kinase family. Type 1 subfamily.

The protein resides in the cytoplasm. It carries out the reaction (R)-pantoate + beta-alanine + ATP = (R)-pantothenate + AMP + diphosphate + H(+). The catalysed reaction is CMP + ATP = CDP + ADP. The enzyme catalyses dCMP + ATP = dCDP + ADP. It functions in the pathway cofactor biosynthesis; (R)-pantothenate biosynthesis; (R)-pantothenate from (R)-pantoate and beta-alanine: step 1/1. Functionally, catalyzes the condensation of pantoate with beta-alanine in an ATP-dependent reaction via a pantoyl-adenylate intermediate. Catalyzes the transfer of a phosphate group from ATP to either CMP or dCMP to form CDP or dCDP and ADP, respectively. The chain is Bifunctional pantoate ligase/cytidylate kinase from Prochlorococcus marinus (strain MIT 9312).